The primary structure comprises 386 residues: Protein RecA (386 aa).

76-83 (GPESSGKT) is an ATP binding site. Positions 362–386 (FDDEDDDFDASTAPAGTFTEVTTEN) are disordered.

The protein belongs to the RecA family.

Its subcellular location is the cytoplasm. Functionally, can catalyze the hydrolysis of ATP in the presence of single-stranded DNA, the ATP-dependent uptake of single-stranded DNA by duplex DNA, and the ATP-dependent hybridization of homologous single-stranded DNAs. It interacts with LexA causing its activation and leading to its autocatalytic cleavage. The sequence is that of Protein RecA from Corynebacterium efficiens (strain DSM 44549 / YS-314 / AJ 12310 / JCM 11189 / NBRC 100395).